A 663-amino-acid polypeptide reads, in one-letter code: DNA ligase 1 (663 aa).

Residues 28–32 and 76–77 each bind NAD(+); these read DKEYD and SL. Lys118 acts as the N6-AMP-lysine intermediate in catalysis. Arg139, Glu173, and Lys310 together coordinate NAD(+). The Zn(2+) site is built by Cys403, Cys406, Cys419, and Cys425. One can recognise a BRCT domain in the interval 583-663; it reads VSESVFNDKT…KFEELIESVK (81 aa).

This sequence belongs to the NAD-dependent DNA ligase family. LigA subfamily. It depends on Mg(2+) as a cofactor. Mn(2+) is required as a cofactor.

It catalyses the reaction NAD(+) + (deoxyribonucleotide)n-3'-hydroxyl + 5'-phospho-(deoxyribonucleotide)m = (deoxyribonucleotide)n+m + AMP + beta-nicotinamide D-nucleotide.. In terms of biological role, DNA ligase that catalyzes the formation of phosphodiester linkages between 5'-phosphoryl and 3'-hydroxyl groups in double-stranded DNA using NAD as a coenzyme and as the energy source for the reaction. It is essential for DNA replication and repair of damaged DNA. This Clostridium acetobutylicum (strain ATCC 824 / DSM 792 / JCM 1419 / IAM 19013 / LMG 5710 / NBRC 13948 / NRRL B-527 / VKM B-1787 / 2291 / W) protein is DNA ligase 1.